The primary structure comprises 309 residues: Dicarboxylate carrier UCP2 (309 aa).

The Mitochondrial intermembrane segment spans residues 1–16 (MVGFKATDVPPTATVK). 3 Solcar repeats span residues 11–106 (PTAT…VKQF), 114–203 (AGIG…IKDA), and 212–297 (DDLP…LKRA). Positions 16 to 63 (KFLGAGTAACIADLITFPLDTAKVRLQIQGERQGPVRAAASAQYRGVL) are important for interaction with long-chain fatty acids. A helical transmembrane segment spans residues 17–40 (FLGAGTAACIADLITFPLDTAKVR). Residues 41–77 (LQIQGERQGPVRAAASAQYRGVLCTILTMVRTEGPRS) are Mitochondrial matrix-facing. The chain crosses the membrane as a helical span at residues 78-103 (LYSGLVAGLQRQMSFASVRIGLYDSV). At 104 to 119 (KQFYTKGSEHAGIGSR) the chain is on the mitochondrial intermembrane side. A helical membrane pass occupies residues 120-145 (LLAGSTTGALAVAVAQPTDVVKVRFQ). At 146–173 (AQARAGSGRRYQSTVDAYKTIAREEGFR) the chain is on the mitochondrial matrix side. Residues 174–199 (GLWKGTSPNVARNAIVNCAELVTYDL) traverse the membrane as a helical segment. Topologically, residues 200 to 217 (IKDALLKANLMTDDLPCH) are mitochondrial intermembrane. A helical transmembrane segment spans residues 218-242 (FTSAFGAGFCTTVIASPVDVVKTRY). Topologically, residues 243 to 268 (MNSALGQYSSAGHCALTMLQKEGPRA) are mitochondrial matrix. The chain crosses the membrane as a helical span at residues 269 to 294 (FYKGFMPSFLRLGSWNVVMFVTYEQL). Residues 278–285 (LRLGSWNV) form an important for interaction with long-chain fatty acids region. Residues 295–309 (KRALMAACTSREAPF) are Mitochondrial intermembrane-facing.

The protein belongs to the mitochondrial carrier (TC 2.A.29) family. In terms of assembly, homotetramer. Adopts an asymmetrical dimer of dimers functional form. Interacts with MICU1 (when methylated); leading to decrease the calcium sensitivity of MICU1.

The protein localises to the mitochondrion inner membrane. It carries out the reaction L-aspartate(out) + phosphate(in) + H(+)(in) = L-aspartate(in) + phosphate(out) + H(+)(out). The enzyme catalyses oxaloacetate(out) + phosphate(in) + H(+)(in) = oxaloacetate(in) + phosphate(out) + H(+)(out). The catalysed reaction is (S)-malate(out) + phosphate(in) + H(+)(in) = (S)-malate(in) + phosphate(out) + H(+)(out). It catalyses the reaction malonate(out) + phosphate(in) + H(+)(in) = malonate(in) + phosphate(out) + H(+)(out). It carries out the reaction sulfate(out) + phosphate(in) + H(+)(in) = sulfate(in) + phosphate(out) + H(+)(out). The enzyme catalyses (S)-malate(out) = (S)-malate(in). The catalysed reaction is L-aspartate(out) = L-aspartate(in). It catalyses the reaction phosphate(in) = phosphate(out). It carries out the reaction chloride(in) = chloride(out). The enzyme catalyses H(+)(in) = H(+)(out). The catalysed reaction is a long-chain fatty acid(out) = a long-chain fatty acid(in). Antiporter that exports dicarboxylate intermediates of the Krebs cycle in exchange for phosphate plus a proton across the inner membrane of mitochondria, a process driven by mitochondrial motive force with an overall impact on glycolysis, glutaminolysis and glutathione-dependent redox balance. Continuous export of oxaloacetate and related four-carbon dicarboxylates from mitochondrial matrix into the cytosol negatively regulates the oxidation of acetyl-CoA substrates via the Krebs cycle lowering the ATP/ADP ratio and reactive oxygen species (ROS) production. May mediate inducible proton entry into the mitochondrial matrix affecting ATP turnover as a protection mechanism against oxidative stress. The proton currents are most likely associated with fatty acid flipping across the inner membrane of mitochondria in a metabolic process regulated by free fatty acids and purine nucleotides. Regulates the use of glucose as a source of energy. Required for glucose-induced DRP1-dependent mitochondrial fission and neuron activation in the ventromedial nucleus of the hypothalamus (VMH). This mitochondrial adaptation mechanism modulates the VMH pool of glucose-excited neurons with an impact on systemic glucose homeostasis. Regulates ROS levels and metabolic reprogramming of macrophages during the resolution phase of inflammation. Attenuates ROS production in response to IL33 to preserve the integrity of the Krebs cycle required for persistent production of itaconate and subsequent GATA3-dependent differentiation of inflammation-resolving alternatively activated macrophages. Can unidirectionally transport anions including L-malate, L-aspartate, phosphate and chloride ions. Does not mediate adaptive thermogenesis. The sequence is that of Dicarboxylate carrier UCP2 (UCP2) from Canis lupus familiaris (Dog).